We begin with the raw amino-acid sequence, 262 residues long: Nodulation protein J (262 aa).

The ABC transmembrane type-2 domain maps to Ala33–Arg259. A run of 6 helical transmembrane segments spans residues Met43–Val63, Ala67–Ile87, Ala119–Leu139, Ile148–Val168, Tyr177–Phe197, and Leu236–Leu256.

The protein belongs to the ABC-2 integral membrane protein family. Lipooligosaccharide exporter (TC 3.A.1.102) subfamily. In terms of assembly, the complex is composed of two ATP-binding proteins (NodI) and two transmembrane proteins (NodJ).

It is found in the cell inner membrane. Its function is as follows. Part of the ABC transporter complex NodIJ involved in the export of the nodulation factors (Nod factors), the bacterial signal molecules that induce symbiosis and subsequent nodulation induction. Nod factors are LCO (lipo-chitin oligosaccharide), a modified beta-1,4-linked N-acetylglucosamine oligosaccharide. This subunit encodes the transporter. The sequence is that of Nodulation protein J (nodJ) from Neorhizobium galegae (Rhizobium galegae).